The chain runs to 395 residues: S-adenosylmethionine synthase (395 aa).

Histidine 16 provides a ligand contact to ATP. Residue aspartate 18 participates in Mg(2+) binding. Glutamate 44 serves as a coordination point for K(+). The L-methionine site is built by glutamate 57 and glutamine 100. The interval 100–110 (QSPDIAQGVDR) is flexible loop. Residues 167-169 (DAK), 233-234 (RF), aspartate 242, 248-249 (RK), alanine 265, and lysine 269 each bind ATP. Aspartate 242 contributes to the L-methionine binding site. Lysine 273 contributes to the L-methionine binding site.

This sequence belongs to the AdoMet synthase family. As to quaternary structure, homotetramer; dimer of dimers. Mg(2+) is required as a cofactor. The cofactor is K(+).

The protein localises to the cytoplasm. It carries out the reaction L-methionine + ATP + H2O = S-adenosyl-L-methionine + phosphate + diphosphate. Its pathway is amino-acid biosynthesis; S-adenosyl-L-methionine biosynthesis; S-adenosyl-L-methionine from L-methionine: step 1/1. Its function is as follows. Catalyzes the formation of S-adenosylmethionine (AdoMet) from methionine and ATP. The overall synthetic reaction is composed of two sequential steps, AdoMet formation and the subsequent tripolyphosphate hydrolysis which occurs prior to release of AdoMet from the enzyme. This is S-adenosylmethionine synthase from Paraburkholderia phymatum (strain DSM 17167 / CIP 108236 / LMG 21445 / STM815) (Burkholderia phymatum).